We begin with the raw amino-acid sequence, 338 residues long: Mitoferrin-1 (338 aa).

The interval 1 to 37 (MELRRGGVGNQAAGRRMDGDCRDGGCGSKDAGSEDYE) is disordered. 3 Solcar repeats span residues 43 to 131 (ASVS…MKRT), 141 to 225 (NSHL…LQEQ), and 232 to 326 (YNPQ…FKYI). Helical transmembrane passes span 45 to 64 (VSTH…SIMY), 106 to 125 (GLNV…FACY), 143 to 162 (HLAN…AVMN), 200 to 219 (SYTT…FITY), 234 to 253 (PQSH…AATT), and 301 to 320 (GIQA…WSVY).

The protein belongs to the mitochondrial carrier (TC 2.A.29) family. Interacts with ACB10; this interaction stabilizes SLC25A37 and enhances the function of SLC25A37 to import mitochondrial iron during erythroid differentiation. Highly expressed in hematopoietic organs, fetal liver, bone marrow and spleen.

The protein resides in the mitochondrion inner membrane. It carries out the reaction Fe(2+)(in) = Fe(2+)(out). In terms of biological role, mitochondrial iron transporter that specifically mediates iron uptake in developing erythroid cells, thereby playing an essential role in heme biosynthesis. The sequence is that of Mitoferrin-1 (Slc25a37) from Mus musculus (Mouse).